A 340-amino-acid polypeptide reads, in one-letter code: Oxygen-dependent coproporphyrinogen-III oxidase (340 aa).

A compositionally biased stretch (polar residues) spans 1-14 (MTVSPTTQPQTNHS). The interval 1–22 (MTVSPTTQPQTNHSLPPADAKQ) is disordered. Ser-109 provides a ligand contact to substrate. A divalent metal cation contacts are provided by His-113 and His-123. Residue His-123 is the Proton donor of the active site. 125–127 (NYR) lines the substrate pocket. 2 residues coordinate a divalent metal cation: His-157 and His-187. The tract at residues 278–313 (YVEFNLVYDRGTIFGLQTNGRTESILMSLPPLVRWQ) is important for dimerization. Position 296–298 (296–298 (NGR)) interacts with substrate.

This sequence belongs to the aerobic coproporphyrinogen-III oxidase family. As to quaternary structure, homodimer. A divalent metal cation is required as a cofactor.

The protein resides in the cytoplasm. It catalyses the reaction coproporphyrinogen III + O2 + 2 H(+) = protoporphyrinogen IX + 2 CO2 + 2 H2O. The protein operates within porphyrin-containing compound metabolism; protoporphyrin-IX biosynthesis; protoporphyrinogen-IX from coproporphyrinogen-III (O2 route): step 1/1. Functionally, involved in the heme and chlorophyll biosynthesis. Catalyzes the aerobic oxidative decarboxylation of propionate groups of rings A and B of coproporphyrinogen-III to yield the vinyl groups in protoporphyrinogen-IX. The sequence is that of Oxygen-dependent coproporphyrinogen-III oxidase from Synechocystis sp. (strain ATCC 27184 / PCC 6803 / Kazusa).